A 505-amino-acid polypeptide reads, in one-letter code: L-carnitine/gamma-butyrobetaine antiporter (505 aa).

The next 12 membrane-spanning stretches (helical) occupy residues I10–V30, W51–F71, I92–I112, G143–V163, F195–V215, L231–L251, S263–M283, W316–A336, L347–G367, L403–I423, L446–L466, and A475–I495.

This sequence belongs to the BCCT transporter (TC 2.A.15) family. CaiT subfamily. In terms of assembly, homotrimer.

It localises to the cell inner membrane. The catalysed reaction is 4-(trimethylamino)butanoate(in) + (R)-carnitine(out) = 4-(trimethylamino)butanoate(out) + (R)-carnitine(in). Its pathway is amine and polyamine metabolism; carnitine metabolism. In terms of biological role, catalyzes the exchange of L-carnitine for gamma-butyrobetaine. In Salmonella agona (strain SL483), this protein is L-carnitine/gamma-butyrobetaine antiporter.